Reading from the N-terminus, the 20-residue chain is Putative 18 kDa spermidine-binding protein (20 aa).

In terms of assembly, dimer of 18 kDa and 60 kDa subunit.

The protein localises to the microsome membrane. It is found in the endoplasmic reticulum membrane. Functionally, may have spermidine-binding activity. This chain is Putative 18 kDa spermidine-binding protein, found in Zea mays (Maize).